Here is a 69-residue protein sequence, read N- to C-terminus: Cap-specific mRNA (nucleoside-2'-O-)-methyltransferase (69 aa).

MRNA is bound at residue Tyr22. Gln39, Tyr66, and Gly68 together coordinate S-adenosyl-L-methionine.

This sequence belongs to the class I-like SAM-binding methyltransferase superfamily. Poxvirus/kinetoplastid 2'-O-MTase family. In terms of assembly, interacts with poly(A) polymerase catalytic subunit OPG063. Interacts with OPG109 and OPG123; these interactions might help linking transcription to capping and polyadenylation.

It is found in the virion. The catalysed reaction is a 5'-end (N(7)-methyl 5'-triphosphoguanosine)-ribonucleoside in mRNA + S-adenosyl-L-methionine = a 5'-end (N(7)-methyl 5'-triphosphoguanosine)-(2'-O-methyl-ribonucleoside) in mRNA + S-adenosyl-L-homocysteine + H(+). Its function is as follows. Displays methyltransferase, positive regulation of the poly(A) polymerase and transcription elongation activities. Involved in the modification of both mRNA ends and in intermediate and late gene positive transcription elongation. At the mRNAs 5' end, methylates the ribose 2' OH group of the first transcribed nucleotide, thereby producing a 2'-O-methylpurine cap. At the 3' end, functions as a processivity factor which stimulates the activity of the viral poly(A) polymerase OPG063 that creates mRNA's poly(A) tail. In the presence of OPG102, OPG063 does not dissociate from the RNA allowing tail elongation to around 250 adenylates. In Sus scrofa (Pig), this protein is Cap-specific mRNA (nucleoside-2'-O-)-methyltransferase (OPG102).